We begin with the raw amino-acid sequence, 812 residues long: Phenylalanine--tRNA ligase beta subunit (812 aa).

The tRNA-binding domain occupies 39–155 (SKTFAPFTIA…ADAPVGAGYA (117 aa)). A B5 domain is found at 405-480 (PEDRVIDFPL…RIVGVDKVPM (76 aa)). 4 residues coordinate Mg(2+): D458, D464, E467, and E468. Positions 718–811 (PAFQPVSRDF…VAKRTGGSLR (94 aa)) constitute an FDX-ACB domain.

The protein belongs to the phenylalanyl-tRNA synthetase beta subunit family. Type 1 subfamily. As to quaternary structure, tetramer of two alpha and two beta subunits. The cofactor is Mg(2+).

The protein resides in the cytoplasm. The enzyme catalyses tRNA(Phe) + L-phenylalanine + ATP = L-phenylalanyl-tRNA(Phe) + AMP + diphosphate + H(+). The sequence is that of Phenylalanine--tRNA ligase beta subunit from Nitrobacter winogradskyi (strain ATCC 25391 / DSM 10237 / CIP 104748 / NCIMB 11846 / Nb-255).